Consider the following 472-residue polypeptide: UDP-glycosyltransferase 100 (472 aa).

The Proton acceptor role is filled by His15. His15 contributes to the an anthocyanidin binding site. The active-site Charge relay is the Asp117. Residues Ala344, Gln346, His361, Trp364, Asn365, Ser366, and Glu369 each contribute to the UDP-alpha-D-glucose site. An anthocyanidin is bound at residue Gly384. Positions 385 and 386 each coordinate UDP-alpha-D-glucose.

The protein belongs to the UDP-glycosyltransferase family.

It carries out the reaction (20S)-protopanaxadiol + UDP-alpha-D-glucose = (20S)-ginsenoside C-K + UDP + H(+). The enzyme catalyses (20S)-protopanaxatriol + UDP-alpha-D-glucose = (20S)-ginsenoside Rh1 + UDP + H(+). It catalyses the reaction (20S)-ginsenoside F1 + UDP-alpha-D-glucose = (20S)-ginsenoside Rg1 + UDP + H(+). It participates in secondary metabolite biosynthesis; terpenoid biosynthesis. Functionally, component of the dammarane-type triterpene saponins (e.g. PPT-type ginsenosides or panaxosides) biosynthetic pathway. Glycosyltransferase that catalyzes the biosynthesis of ginsenoside Rh1 from protopanaxatriol (PPT) and the conversion of ginsenoside F1 to ginsenoside Rg1. The sequence is that of UDP-glycosyltransferase 100 from Panax ginseng (Korean ginseng).